The following is a 416-amino-acid chain: Formyl-CoA:oxalate CoA-transferase (416 aa).

CoA contacts are provided by residues 17-18, R38, 72-75, 96-98, H104, and 137-140; these read QS, LNTK, NFH, and KAYE. Residue D169 is the Nucleophile of the active site. Residue 248–250 coordinates substrate; it reads GGQ. A CoA-binding site is contributed by 273 to 275; that stretch reads QEQ.

Belongs to the CoA-transferase III family. Frc subfamily. In terms of assembly, homodimer.

The enzyme catalyses formyl-CoA + oxalate = oxalyl-CoA + formate. Its pathway is metabolic intermediate degradation; oxalate degradation; CO(2) and formate from oxalate: step 1/2. Its function is as follows. Involved in the catabolism of oxalate and in the adapatation to low pH via the induction of the oxalate-dependent acid tolerance response (ATR). Catalyzes the transfer of the CoA moiety from formyl-CoA to oxalate. The polypeptide is Formyl-CoA:oxalate CoA-transferase (Escherichia coli O81 (strain ED1a)).